Reading from the N-terminus, the 393-residue chain is MVTIGTPKSATATKVVLCGSGELGKEFVIELQRYGVEVIALDKYPDAPAMQVAHRSYVVSMLDGDALREIIEKEKPDYIVPEVEAIATRTLMELEEEGYHVIPTARATWLTMNREGIRRLAAEELGLPTSPYRFAETEEEFKEAVKVIGMPCVVKPIMSSSGHGQSVVREEKDIDRAWQYAQEGGRAGAGKVIVEGFVDFDYEITQLTVRHIGGTSFLEPVGHVQVDGDYRESWQPQAMSLAAKAKAREIAGKITEALGGRGIFGVELFIKGDDVIFSEVSPRPHDTGMVTMITQDLSQFALHARAVLGLPIPNIVFHGAGASRAVVVEGDSDRLSLGNLDKVLEQPDTQMRFFGKPEVHGHRRMAVLLARGLDVTEAREKTGVMMEQLNVKL.

N(1)-(5-phospho-beta-D-ribosyl)glycinamide-binding positions include 22-23 and Glu-82; that span reads EL. ATP-binding positions include Arg-114, Lys-155, 160-165, 195-198, and Glu-203; these read SSGHGQ and EGFV. The ATP-grasp domain maps to 119-308; sequence RLAAEELGLP…QFALHARAVL (190 aa). Residues Glu-267 and Glu-279 each contribute to the Mg(2+) site. Residues Asp-286, Lys-356, and 363-364 each bind N(1)-(5-phospho-beta-D-ribosyl)glycinamide; that span reads RR.

Belongs to the PurK/PurT family. Homodimer.

The catalysed reaction is N(1)-(5-phospho-beta-D-ribosyl)glycinamide + formate + ATP = N(2)-formyl-N(1)-(5-phospho-beta-D-ribosyl)glycinamide + ADP + phosphate + H(+). It participates in purine metabolism; IMP biosynthesis via de novo pathway; N(2)-formyl-N(1)-(5-phospho-D-ribosyl)glycinamide from N(1)-(5-phospho-D-ribosyl)glycinamide (formate route): step 1/1. Its function is as follows. Involved in the de novo purine biosynthesis. Catalyzes the transfer of formate to 5-phospho-ribosyl-glycinamide (GAR), producing 5-phospho-ribosyl-N-formylglycinamide (FGAR). Formate is provided by PurU via hydrolysis of 10-formyl-tetrahydrofolate. The polypeptide is Formate-dependent phosphoribosylglycinamide formyltransferase (Parabacteroides distasonis (strain ATCC 8503 / DSM 20701 / CIP 104284 / JCM 5825 / NCTC 11152)).